A 199-amino-acid polypeptide reads, in one-letter code: Protein GrpE (199 aa).

The segment at 1–50 (MAKKSTRTTPEDSQASTTDSAATSTASEATQAATSATDDQAEQTTAVDPT) is disordered. The segment covering 11–46 (EDSQASTTDSAATSTASEATQAATSATDDQAEQTTA) has biased composition (low complexity).

The protein belongs to the GrpE family. In terms of assembly, homodimer.

The protein localises to the cytoplasm. Its function is as follows. Participates actively in the response to hyperosmotic and heat shock by preventing the aggregation of stress-denatured proteins, in association with DnaK and GrpE. It is the nucleotide exchange factor for DnaK and may function as a thermosensor. Unfolded proteins bind initially to DnaJ; upon interaction with the DnaJ-bound protein, DnaK hydrolyzes its bound ATP, resulting in the formation of a stable complex. GrpE releases ADP from DnaK; ATP binding to DnaK triggers the release of the substrate protein, thus completing the reaction cycle. Several rounds of ATP-dependent interactions between DnaJ, DnaK and GrpE are required for fully efficient folding. This chain is Protein GrpE, found in Lactiplantibacillus plantarum (strain ATCC BAA-793 / NCIMB 8826 / WCFS1) (Lactobacillus plantarum).